We begin with the raw amino-acid sequence, 391 residues long: UPF0328 protein ECU06_1650 (391 aa).

This sequence belongs to the UPF0328 family.

The polypeptide is UPF0328 protein ECU06_1650 (Encephalitozoon cuniculi (strain GB-M1) (Microsporidian parasite)).